A 454-amino-acid chain; its full sequence is tRNA modification GTPase MnmE (454 aa).

Positions 23, 80, and 120 each coordinate (6S)-5-formyl-5,6,7,8-tetrahydrofolate. In terms of domain architecture, TrmE-type G spans 216–377 (GMKVVIAGRP…LRNHLKQSMG (162 aa)). N226 is a K(+) binding site. Residues 226–231 (NAGKSS), 245–251 (TDIAGTT), 270–273 (DTAG), 335–338 (NKAD), and 358–360 (SAR) contribute to the GTP site. Residue S230 coordinates Mg(2+). Residues T245, I247, and T250 each coordinate K(+). T251 serves as a coordination point for Mg(2+). K454 is a binding site for (6S)-5-formyl-5,6,7,8-tetrahydrofolate.

It belongs to the TRAFAC class TrmE-Era-EngA-EngB-Septin-like GTPase superfamily. TrmE GTPase family. Homodimer. Heterotetramer of two MnmE and two MnmG subunits. It depends on K(+) as a cofactor.

The protein resides in the cytoplasm. Exhibits a very high intrinsic GTPase hydrolysis rate. Involved in the addition of a carboxymethylaminomethyl (cmnm) group at the wobble position (U34) of certain tRNAs, forming tRNA-cmnm(5)s(2)U34. The sequence is that of tRNA modification GTPase MnmE from Shigella boydii serotype 18 (strain CDC 3083-94 / BS512).